The chain runs to 431 residues: 23S rRNA (uracil(1939)-C(5))-methyltransferase RlmD (431 aa).

The TRAM domain occupies 8 to 68 (KRRVTTRQII…SKYSRGQVKR (61 aa)). [4Fe-4S] cluster contacts are provided by C81, C87, C90, and C162. 6 residues coordinate S-adenosyl-L-methionine: Q265, F294, N299, E315, N342, and D363. C389 (nucleophile) is an active-site residue.

The protein belongs to the class I-like SAM-binding methyltransferase superfamily. RNA M5U methyltransferase family. RlmD subfamily.

It catalyses the reaction uridine(1939) in 23S rRNA + S-adenosyl-L-methionine = 5-methyluridine(1939) in 23S rRNA + S-adenosyl-L-homocysteine + H(+). Catalyzes the formation of 5-methyl-uridine at position 1939 (m5U1939) in 23S rRNA. This chain is 23S rRNA (uracil(1939)-C(5))-methyltransferase RlmD, found in Enterobacter sp. (strain 638).